A 261-amino-acid polypeptide reads, in one-letter code: 6-carboxyhexanoate--CoA ligase (261 aa).

The protein belongs to the BioW family. In terms of assembly, homodimer. The cofactor is Mg(2+).

It catalyses the reaction heptanedioate + ATP + CoA = 6-carboxyhexanoyl-CoA + AMP + diphosphate. It participates in metabolic intermediate metabolism; pimeloyl-CoA biosynthesis; pimeloyl-CoA from pimelate: step 1/1. In terms of biological role, catalyzes the transformation of pimelate into pimeloyl-CoA with concomitant hydrolysis of ATP to AMP. This Bacillus licheniformis (strain ATCC 14580 / DSM 13 / JCM 2505 / CCUG 7422 / NBRC 12200 / NCIMB 9375 / NCTC 10341 / NRRL NRS-1264 / Gibson 46) protein is 6-carboxyhexanoate--CoA ligase.